We begin with the raw amino-acid sequence, 179 residues long: Early E3 20.1 kDa glycoprotein (179 aa).

5 N-linked (GlcNAc...) asparagine; by host glycosylation sites follow: N29, N57, N70, N75, and N123.

The protein belongs to the adenoviridae E3_20 family.

Its function is as follows. E3 proteins seem to be dispensable for virus growth in tissue culture cells. They are potentially important for virus growth under special conditions; E3 region may help adenoviruses to evade the immune surveillance of the host. The polypeptide is Early E3 20.1 kDa glycoprotein (Homo sapiens (Human)).